A 342-amino-acid polypeptide reads, in one-letter code: MSINVEQAIIHSISQDGEGQLSCRLRPQPLLNSQAVEAMLEELHQTYTTKAGKGFGHFGINGEDGEANTKFEEALTTYRSGELGFVEFSGIAGKLLQEELAKYDFSTGGFLLLSCYTYMTSDYLFVSLLNAKSSMTVLDDMELSQNTHLDLNNVQLAARIDLTEWQADPESKKYISFIRGRAGRKVADFFLDFMGCVEGVNTKAQNKSLMNAVEDFVGNSELTKDERQQARERVFDYCTERCDEGASIQIKDLADELADQGMDSFYDFAQGGNYELEEEFPGDKPTLRQLKKFSGTGGGVTLSFDGQHLGERVIYDPVSDTIIIKGVPANLKDQLDRRLKGE.

This sequence belongs to the YejK family.

Its subcellular location is the cytoplasm. It localises to the nucleoid. The chain is Nucleoid-associated protein Spea_1765 from Shewanella pealeana (strain ATCC 700345 / ANG-SQ1).